A 322-amino-acid chain; its full sequence is Replication factor C small subunit (322 aa).

46 to 53 is a binding site for ATP; it reads GSAGIGKT.

The protein belongs to the activator 1 small subunits family. RfcS subfamily. In terms of assembly, heteromultimer composed of small subunits (RfcS) and large subunits (RfcL).

In terms of biological role, part of the RFC clamp loader complex which loads the PCNA sliding clamp onto DNA. This chain is Replication factor C small subunit, found in Methanoculleus marisnigri (strain ATCC 35101 / DSM 1498 / JR1).